We begin with the raw amino-acid sequence, 261 residues long: Cytochrome c oxidase subunit 3 (261 aa).

The Mitochondrial matrix segment spans residues Met1–Pro15. The helical transmembrane segment at Trp16 to Trp34 threads the bilayer. Over Phe35–Met40 the chain is Mitochondrial intermembrane. The chain crosses the membrane as a helical span at residues Thr41–Thr66. The Mitochondrial matrix segment spans residues Tyr67–Thr72. Residues Pro73–Ser105 form a helical membrane-spanning segment. Over Leu106–Glu128 the chain is Mitochondrial intermembrane. The helical transmembrane segment at Val129–Met152 threads the bilayer. The Mitochondrial matrix portion of the chain corresponds to Glu153–Asn155. Residues Arg156–Glu183 form a helical membrane-spanning segment. Over Ser184–Asp190 the chain is Mitochondrial intermembrane. The helical transmembrane segment at Gly191–Leu223 threads the bilayer. Residues Met224 to His232 are Mitochondrial matrix-facing. Residues Phe233–Ile256 form a helical membrane-spanning segment. The Mitochondrial intermembrane portion of the chain corresponds to Tyr257 to Ser261.

The protein belongs to the cytochrome c oxidase subunit 3 family. As to quaternary structure, component of the cytochrome c oxidase (complex IV, CIV), a multisubunit enzyme composed of 14 subunits. The complex is composed of a catalytic core of 3 subunits MT-CO1, MT-CO2 and MT-CO3, encoded in the mitochondrial DNA, and 11 supernumerary subunits COX4I1 (or COX4I2), COX5A, COX5B, COX6A1 (or COX6A2), COX6B1 (or COX6B2), COX6C, COX7A2 (or COX7A1), COX7B, COX7C, COX8A and NDUFA4, which are encoded in the nuclear genome. The complex exists as a monomer or a dimer and forms supercomplexes (SCs) in the inner mitochondrial membrane with NADH-ubiquinone oxidoreductase (complex I, CI) and ubiquinol-cytochrome c oxidoreductase (cytochrome b-c1 complex, complex III, CIII), resulting in different assemblies (supercomplex SCI(1)III(2)IV(1) and megacomplex MCI(2)III(2)IV(2)).

It localises to the mitochondrion inner membrane. The catalysed reaction is 4 Fe(II)-[cytochrome c] + O2 + 8 H(+)(in) = 4 Fe(III)-[cytochrome c] + 2 H2O + 4 H(+)(out). In terms of biological role, component of the cytochrome c oxidase, the last enzyme in the mitochondrial electron transport chain which drives oxidative phosphorylation. The respiratory chain contains 3 multisubunit complexes succinate dehydrogenase (complex II, CII), ubiquinol-cytochrome c oxidoreductase (cytochrome b-c1 complex, complex III, CIII) and cytochrome c oxidase (complex IV, CIV), that cooperate to transfer electrons derived from NADH and succinate to molecular oxygen, creating an electrochemical gradient over the inner membrane that drives transmembrane transport and the ATP synthase. Cytochrome c oxidase is the component of the respiratory chain that catalyzes the reduction of oxygen to water. Electrons originating from reduced cytochrome c in the intermembrane space (IMS) are transferred via the dinuclear copper A center (CU(A)) of subunit 2 and heme A of subunit 1 to the active site in subunit 1, a binuclear center (BNC) formed by heme A3 and copper B (CU(B)). The BNC reduces molecular oxygen to 2 water molecules using 4 electrons from cytochrome c in the IMS and 4 protons from the mitochondrial matrix. The chain is Cytochrome c oxidase subunit 3 (MT-CO3) from Homo sapiens (Human).